Consider the following 113-residue polypeptide: Crustacean hyperglycemic hormones B (113 aa).

Residues 1-26 (MVAFRMMSMALLVVVASSWWASPVEA) form the signal peptide. 3 disulfide bridges follow: C46/C82, C62/C78, and C65/C91. Position 111 is a valine amide (V111).

The protein belongs to the arthropod CHH/MIH/GIH/VIH hormone family. In terms of tissue distribution, expressed at a constant level in the eyestalks of juveniles and mature females. A low level expression is seen in the central nervous system.

Its subcellular location is the secreted. Hormone found in the sinus gland of isopods and decapods which controls the blood sugar level. Has a secretagogue action over the amylase released from the midgut gland. May act as a stress hormone and may be involved in the control of molting and reproduction. The sequence is that of Crustacean hyperglycemic hormones B from Metapenaeus ensis (Greasyback shrimp).